The chain runs to 279 residues: Nitrate import permease protein NrtB (279 aa).

Residues 86–270 enclose the ABC transmembrane type-1 domain; it reads IAASLQRVAV…LLNALVGFIA (185 aa). Transmembrane regions (helical) follow at residues 98-118, 124-144, 151-171, 196-216, 217-237, and 249-269; these read LMAA…VLMF, IFQV…LAAF, AIFV…AVGV, VLLP…IGLS, WLAI…FFIW, and ILAI…VGFI.

It belongs to the binding-protein-dependent transport system permease family. CysTW subfamily. In terms of assembly, the complex is composed of two ATP-binding proteins (NrtC and NrtD), two transmembrane proteins (NrtB) and a solute-binding protein (NrtA).

The protein localises to the cell inner membrane. Functionally, part of the ABC transporter complex NrtABCD involved in nitrate uptake. The complex is probably also involved in nitrite transport. Probably responsible for the translocation of the substrate across the membrane. This chain is Nitrate import permease protein NrtB, found in Leptolyngbya laminosa (Phormidium laminosum).